Here is a 910-residue protein sequence, read N- to C-terminus: Alanine--tRNA ligase (910 aa).

Over residues 488-505 the composition is skewed to basic and acidic residues; that stretch reads RHEEKKEDSKSEKGENTA. A disordered region spans residues 488–507; sequence RHEEKKEDSKSEKGENTAEK. Zn(2+)-binding residues include His614, His618, Cys718, and His722.

This sequence belongs to the class-II aminoacyl-tRNA synthetase family. Requires Zn(2+) as cofactor.

The protein localises to the cytoplasm. The catalysed reaction is tRNA(Ala) + L-alanine + ATP = L-alanyl-tRNA(Ala) + AMP + diphosphate. In terms of biological role, catalyzes the attachment of alanine to tRNA(Ala) in a two-step reaction: alanine is first activated by ATP to form Ala-AMP and then transferred to the acceptor end of tRNA(Ala). Also edits incorrectly charged Ser-tRNA(Ala) and Gly-tRNA(Ala) via its editing domain. The sequence is that of Alanine--tRNA ligase from Methanococcus aeolicus (strain ATCC BAA-1280 / DSM 17508 / OCM 812 / Nankai-3).